Reading from the N-terminus, the 421-residue chain is Gamma-glutamyl phosphate reductase (421 aa).

Belongs to the gamma-glutamyl phosphate reductase family.

It localises to the cytoplasm. The catalysed reaction is L-glutamate 5-semialdehyde + phosphate + NADP(+) = L-glutamyl 5-phosphate + NADPH + H(+). Its pathway is amino-acid biosynthesis; L-proline biosynthesis; L-glutamate 5-semialdehyde from L-glutamate: step 2/2. Its function is as follows. Catalyzes the NADPH-dependent reduction of L-glutamate 5-phosphate into L-glutamate 5-semialdehyde and phosphate. The product spontaneously undergoes cyclization to form 1-pyrroline-5-carboxylate. This Roseobacter denitrificans (strain ATCC 33942 / OCh 114) (Erythrobacter sp. (strain OCh 114)) protein is Gamma-glutamyl phosphate reductase.